Here is a 440-residue protein sequence, read N- to C-terminus: Chitinase-like protein Idgf5 (440 aa).

The N-terminal stretch at Met-1–Ala-27 is a signal peptide. Positions Ala-28 to Phe-439 constitute a GH18 domain. Cys-32 and Cys-56 are disulfide-bonded. N-linked (GlcNAc...) asparagine glycans are attached at residues Asn-126, Asn-283, and Asn-403. A disulfide bridge connects residues Cys-340 and Cys-421.

This sequence belongs to the glycosyl hydrolase 18 family. IDGF subfamily. Post-translationally, glycosylated.

The protein resides in the secreted. Cooperates with insulin-like peptides to stimulate the proliferation, polarization and motility of imaginal disk cells. May act by stabilizing the binding of insulin-like peptides to its receptor through a simultaneous interaction with both molecules to form a multiprotein signaling complex. The chain is Chitinase-like protein Idgf5 (Idgf5) from Glossina morsitans morsitans (Savannah tsetse fly).